Reading from the N-terminus, the 144-residue chain is Granulocyte-macrophage colony-stimulating factor (144 aa).

A signal peptide spans 1–17 (MWLQNLLFLGIVVYSFS). The O-linked (GalNAc...) serine glycan is linked to S22. T27 carries O-linked (GalNAc...) threonine glycosylation. 2 disulfides stabilise this stretch: C71–C113 and C105–C138. A glycan (N-linked (GlcNAc...) asparagine) is linked at N86.

It belongs to the GM-CSF family. In terms of assembly, monomer. The signaling GM-CSF receptor complex is a dodecamer of two head-to-head hexamers of two alpha, two beta, and two ligand subunits.

It is found in the secreted. Its function is as follows. Cytokine that stimulates the growth and differentiation of hematopoietic precursor cells from various lineages, including granulocytes, macrophages, eosinophils and erythrocytes. The sequence is that of Granulocyte-macrophage colony-stimulating factor (Csf2) from Rattus norvegicus (Rat).